The following is a 285-amino-acid chain: MAADGTLSRGGVGEAVEEEHPGALEPGAAPFGNFPHYSRFHPPEQRLRLLPPELLRQLFPPEGPEKRPILGLDVGCNSGDLSVALYKHFLSPRDGETCSGASRELRILCCDIDPVLVERAERDCPFPEALTFITLDIMDQESRKVPLSSFLSQFGRSVFDMVFCMSVTMWIHLNHGDRGLCEFLAHVSSLCSYLLVEPQPWKCYRAAARRLRKLGLHSFDHFRSLAIRGDMAKQIVRILTQDHGMELACCFGNTSWDRSLLLFRAKHTHETQAIPESSTKETRTD.

S-adenosyl-L-methionine is bound by residues R46, N77, D111, 136–137 (DI), and M165. The region spanning 53 to 275 (ELLRQLFPPE…KHTHETQAIP (223 aa)) is the Bin3-type SAM domain.

Belongs to the methyltransferase superfamily. As to quaternary structure, interacts with DICER1; the interaction may be mediated by RNA.

The protein localises to the cytoplasm. It carries out the reaction a 5'-end 5'-phospho-ribonucleoside-RNA + S-adenosyl-L-methionine = a 5'-end (5'-methylphospho)-ribonucleoside-RNA + S-adenosyl-L-homocysteine. The catalysed reaction is a 5'-end 5'-phospho-ribonucleoside-RNA + 2 S-adenosyl-L-methionine = a 5'-end (5'-bismethylphospho)-ribonucleoside-RNA + 2 S-adenosyl-L-homocysteine. Its function is as follows. O-methyltransferase that specifically monomethylates 5'-monophosphate of cytoplasmic histidyl tRNA (tRNA(His)), acting as a capping enzyme by protecting tRNA(His) from cleavage by DICER1. Also able, with less efficiently, to methylate the 5' monophosphate of a subset of pre-miRNAs, acting as a negative regulator of miRNA processing. The 5' monophosphate of pre-miRNAs is recognized by DICER1 and is required for pre-miRNAs processing: methylation at this position reduces the processing of pre-miRNAs by DICER1. Was also reported to mediate dimethylation of pre-miR-145; however dimethylation cannot be reproduced by another group which observes a monomethylation of pre-miR-145. The sequence is that of RNA 5'-monophosphate methyltransferase from Mus musculus (Mouse).